A 548-amino-acid chain; its full sequence is 2-succinyl-5-enolpyruvyl-6-hydroxy-3-cyclohexene-1-carboxylate synthase (548 aa).

It belongs to the TPP enzyme family. MenD subfamily. As to quaternary structure, homodimer. The cofactor is Mg(2+). Mn(2+) is required as a cofactor. Requires thiamine diphosphate as cofactor.

The enzyme catalyses isochorismate + 2-oxoglutarate + H(+) = 5-enolpyruvoyl-6-hydroxy-2-succinyl-cyclohex-3-ene-1-carboxylate + CO2. It participates in quinol/quinone metabolism; 1,4-dihydroxy-2-naphthoate biosynthesis; 1,4-dihydroxy-2-naphthoate from chorismate: step 2/7. Its pathway is quinol/quinone metabolism; menaquinone biosynthesis. In terms of biological role, catalyzes the thiamine diphosphate-dependent decarboxylation of 2-oxoglutarate and the subsequent addition of the resulting succinic semialdehyde-thiamine pyrophosphate anion to isochorismate to yield 2-succinyl-5-enolpyruvyl-6-hydroxy-3-cyclohexene-1-carboxylate (SEPHCHC). This chain is 2-succinyl-5-enolpyruvyl-6-hydroxy-3-cyclohexene-1-carboxylate synthase, found in Mycobacterium ulcerans (strain Agy99).